Consider the following 122-residue polypeptide: Translation repressor protein (122 aa).

Positions 15 to 37 form a DNA-binding region, H-T-H motif; that stretch reads VKETLTRMGIANNKDKVLYQSCH.

Controls the translation of a number of proteins (such as regA itself, rIIB and at least 35 others) by binding to their mRNA. In Escherichia phage RB69 (Bacteriophage RB69), this protein is Translation repressor protein (regA).